Here is a 257-residue protein sequence, read N- to C-terminus: UPF0246 protein Daro_2893 (257 aa).

This sequence belongs to the UPF0246 family.

The sequence is that of UPF0246 protein Daro_2893 from Dechloromonas aromatica (strain RCB).